The chain runs to 337 residues: Glyceraldehyde-3-phosphate dehydrogenase (337 aa).

NAD(+) contacts are provided by residues 12-13 (RI), Asp-34, and Lys-79. D-glyceraldehyde 3-phosphate-binding positions include 150 to 152 (SCT), Thr-181, 210 to 211 (TG), and Arg-233. Residue Cys-151 is the Nucleophile of the active site. Position 315 (Asn-315) interacts with NAD(+).

Belongs to the glyceraldehyde-3-phosphate dehydrogenase family. As to quaternary structure, homotetramer.

The protein resides in the cytoplasm. It carries out the reaction D-glyceraldehyde 3-phosphate + phosphate + NAD(+) = (2R)-3-phospho-glyceroyl phosphate + NADH + H(+). The protein operates within carbohydrate degradation; glycolysis; pyruvate from D-glyceraldehyde 3-phosphate: step 1/5. This chain is Glyceraldehyde-3-phosphate dehydrogenase (GPD), found in Schizophyllum commune (Split gill fungus).